Reading from the N-terminus, the 333-residue chain is ADP-L-glycero-D-manno-heptose-6-epimerase (333 aa).

NADP(+) is bound by residues 11-12 (FI), 32-33 (DN), K39, K54, 76-80 (QGACS), and N93. Y140 acts as the Proton acceptor in catalysis. K144 contributes to the NADP(+) binding site. Residue N170 participates in substrate binding. NADP(+) is bound by residues V171 and K179. K179 (proton acceptor) is an active-site residue. Substrate contacts are provided by residues R181, H188, 202–205 (FGGW), R215, and Y294.

Belongs to the NAD(P)-dependent epimerase/dehydratase family. HldD subfamily. In terms of assembly, homopentamer. NADP(+) is required as a cofactor.

It carries out the reaction ADP-D-glycero-beta-D-manno-heptose = ADP-L-glycero-beta-D-manno-heptose. Its pathway is nucleotide-sugar biosynthesis; ADP-L-glycero-beta-D-manno-heptose biosynthesis; ADP-L-glycero-beta-D-manno-heptose from D-glycero-beta-D-manno-heptose 7-phosphate: step 4/4. It functions in the pathway bacterial outer membrane biogenesis; LPS core biosynthesis. Catalyzes the interconversion between ADP-D-glycero-beta-D-manno-heptose and ADP-L-glycero-beta-D-manno-heptose via an epimerization at carbon 6 of the heptose. This chain is ADP-L-glycero-D-manno-heptose-6-epimerase, found in Chromobacterium violaceum (strain ATCC 12472 / DSM 30191 / JCM 1249 / CCUG 213 / NBRC 12614 / NCIMB 9131 / NCTC 9757 / MK).